The following is a 256-amino-acid chain: 1-(5-phosphoribosyl)-5-[(5-phosphoribosylamino)methylideneamino] imidazole-4-carboxamide isomerase (256 aa).

Aspartate 8 acts as the Proton acceptor in catalysis. Aspartate 129 (proton donor) is an active-site residue.

The protein belongs to the HisA/HisF family.

It localises to the cytoplasm. It carries out the reaction 1-(5-phospho-beta-D-ribosyl)-5-[(5-phospho-beta-D-ribosylamino)methylideneamino]imidazole-4-carboxamide = 5-[(5-phospho-1-deoxy-D-ribulos-1-ylimino)methylamino]-1-(5-phospho-beta-D-ribosyl)imidazole-4-carboxamide. It participates in amino-acid biosynthesis; L-histidine biosynthesis; L-histidine from 5-phospho-alpha-D-ribose 1-diphosphate: step 4/9. In Synechococcus sp. (strain WH7803), this protein is 1-(5-phosphoribosyl)-5-[(5-phosphoribosylamino)methylideneamino] imidazole-4-carboxamide isomerase.